Here is a 142-residue protein sequence, read N- to C-terminus: Protein-export protein SecB (142 aa).

This sequence belongs to the SecB family. Homotetramer, a dimer of dimers. One homotetramer interacts with 1 SecA dimer.

The protein localises to the cytoplasm. Its function is as follows. One of the proteins required for the normal export of preproteins out of the cell cytoplasm. It is a molecular chaperone that binds to a subset of precursor proteins, maintaining them in a translocation-competent state. It also specifically binds to its receptor SecA. The chain is Protein-export protein SecB from Buchnera aphidicola subsp. Acyrthosiphon pisum (strain 5A).